The sequence spans 112 residues: Large ribosomal subunit protein eL30 (112 aa).

This sequence belongs to the eukaryotic ribosomal protein eL30 family. Expressed in roots and leaves.

The polypeptide is Large ribosomal subunit protein eL30 (Triticum aestivum (Wheat)).